The primary structure comprises 142 residues: Phosphoribosyl-AMP cyclohydrolase (142 aa).

Position 85 (Asp-85) interacts with Mg(2+). Residue Cys-86 participates in Zn(2+) binding. Mg(2+) is bound by residues Asp-87 and Asp-89. Positions 102 and 109 each coordinate Zn(2+). The segment at 120 to 142 (GEPPTPVGAGERQPASGTADAAP) is disordered.

The protein belongs to the PRA-CH family. As to quaternary structure, homodimer. It depends on Mg(2+) as a cofactor. Requires Zn(2+) as cofactor.

It is found in the cytoplasm. It carries out the reaction 1-(5-phospho-beta-D-ribosyl)-5'-AMP + H2O = 1-(5-phospho-beta-D-ribosyl)-5-[(5-phospho-beta-D-ribosylamino)methylideneamino]imidazole-4-carboxamide. It functions in the pathway amino-acid biosynthesis; L-histidine biosynthesis; L-histidine from 5-phospho-alpha-D-ribose 1-diphosphate: step 3/9. Its function is as follows. Catalyzes the hydrolysis of the adenine ring of phosphoribosyl-AMP. This Acidothermus cellulolyticus (strain ATCC 43068 / DSM 8971 / 11B) protein is Phosphoribosyl-AMP cyclohydrolase.